A 167-amino-acid chain; its full sequence is Protein FAM163B (167 aa).

The helical transmembrane segment at 6 to 26 threads the bilayer; the sequence is VVITGGILATVILLCIIAVLC. At serine 40 the chain carries Phosphoserine.

The protein belongs to the FAM163 family.

It is found in the membrane. This chain is Protein FAM163B (Fam163b), found in Mus musculus (Mouse).